A 430-amino-acid polypeptide reads, in one-letter code: Lipoyl synthase, chloroplastic (430 aa).

Residues 1–16 show a composition bias toward polar residues; the sequence is MRSLATLHQSPASCSR. The N-terminal 40 residues, 1-40, are a transit peptide targeting the chloroplast; that stretch reads MRSLATLHQSPASCSRSAPVAPCPARRANSSRRVARQGPR. 2 disordered regions span residues 1 to 55 and 85 to 119; these read MRSL…SEDV and HLRS…SLGA. Over residues 91-119 the composition is skewed to low complexity; it reads KSAAPVSPFAAPSPGSPSASSMLGPSLGA. 7 residues coordinate [4Fe-4S] cluster: Cys-155, Cys-160, Cys-166, Cys-183, Cys-187, Cys-190, and Ser-397. A Radical SAM core domain is found at 166–386; sequence CWNGELATAT…KFGQEEIGFR (221 aa).

Belongs to the radical SAM superfamily. Lipoyl synthase family. The cofactor is [4Fe-4S] cluster.

The protein resides in the plastid. It localises to the chloroplast. The catalysed reaction is [[Fe-S] cluster scaffold protein carrying a second [4Fe-4S](2+) cluster] + N(6)-octanoyl-L-lysyl-[protein] + 2 oxidized [2Fe-2S]-[ferredoxin] + 2 S-adenosyl-L-methionine + 4 H(+) = [[Fe-S] cluster scaffold protein] + N(6)-[(R)-dihydrolipoyl]-L-lysyl-[protein] + 4 Fe(3+) + 2 hydrogen sulfide + 2 5'-deoxyadenosine + 2 L-methionine + 2 reduced [2Fe-2S]-[ferredoxin]. Its pathway is protein modification; protein lipoylation via endogenous pathway; protein N(6)-(lipoyl)lysine from octanoyl-[acyl-carrier-protein]: step 2/2. In terms of biological role, catalyzes the radical-mediated insertion of two sulfur atoms into the C-6 and C-8 positions of the octanoyl moiety bound to the lipoyl domains of lipoate-dependent enzymes, thereby converting the octanoylated domains into lipoylated derivatives. The polypeptide is Lipoyl synthase, chloroplastic (Chlamydomonas reinhardtii (Chlamydomonas smithii)).